A 339-amino-acid chain; its full sequence is UDP-glucose 4-epimerase (339 aa).

Residues 12 to 13, 32 to 37, 59 to 60, 81 to 85, Asn-100, Ser-125, Tyr-150, Lys-154, and Phe-179 contribute to the NAD(+) site; these read FI, DNLCNS, DI, and FAGLK. Ser-125 and Tyr-150 together coordinate substrate. Tyr-150 functions as the Proton acceptor in the catalytic mechanism. Substrate-binding positions include Asn-180, 200–201, 217–219, Arg-232, and 293–296; these read NL, SVF, and RAGD.

Belongs to the NAD(P)-dependent epimerase/dehydratase family. Homodimer. NAD(+) is required as a cofactor.

The catalysed reaction is UDP-alpha-D-glucose = UDP-alpha-D-galactose. It participates in carbohydrate metabolism; galactose metabolism. In terms of biological role, involved in the metabolism of galactose. Plays an essential role in the incorporation of galactose into meningococcal lipopolysaccharide surface molecules, which are important for pathogenesis. Catalyzes the conversion of UDP-galactose (UDP-Gal) to UDP-glucose (UDP-Glc) through a mechanism involving the transient reduction of NAD. The protein is UDP-glucose 4-epimerase (galE) of Neisseria meningitidis serogroup A / serotype 4A (strain DSM 15465 / Z2491).